The following is a 237-amino-acid chain: Proteasome subunit beta type-1 (237 aa).

Belongs to the peptidase T1B family. In terms of assembly, the 26S proteasome consists of a 20S proteasome core and two 19S regulatory subunits. The 20S proteasome core is a barrel-shaped complex made of 28 subunits that are arranged in four stacked rings. The two outer rings are each formed by seven alpha subunits, and the two inner rings are formed by seven beta subunits. The proteolytic activity is exerted by three beta-subunits psmb5, psmb6 and psmb7.

Its subcellular location is the cytoplasm. The protein localises to the nucleus. Its function is as follows. Non-catalytic component of the 20S core proteasome complex involved in the proteolytic degradation of most intracellular proteins. This complex plays numerous essential roles within the cell by associating with different regulatory particles. Associated with two 19S regulatory particles, forms the 26S proteasome and thus participates in the ATP-dependent degradation of ubiquitinated proteins. The 26S proteasome plays a key role in the maintenance of protein homeostasis by removing misfolded or damaged proteins that could impair cellular functions, and by removing proteins whose functions are no longer required. Associated with the PA200 or PA28, the 20S proteasome mediates ubiquitin-independent protein degradation. The polypeptide is Proteasome subunit beta type-1 (Danio rerio (Zebrafish)).